The sequence spans 434 residues: Septin-7 (434 aa).

Tyrosine 27 carries the post-translational modification Phosphotyrosine. Positions 44 to 313 (RGFEFTLMVV…ENYRSRKLAA (270 aa)) constitute a Septin-type G domain. Residues 44–314 (RGFEFTLMVV…NYRSRKLAAV (271 aa)) form an interaction with SEPTIN12 region. The segment at 54-61 (GESGLGKS) is G1 motif. A GTP-binding site is contributed by 54–61 (GESGLGKS). Residue serine 74 is modified to Phosphoserine. GTP-binding positions include threonine 87, glycine 113, and 192–200 (KADTLTPEE). A G3 motif region spans residues 110–113 (DTPG). A G4 motif region spans residues 191-194 (AKAD). Residue threonine 225 is modified to Phosphothreonine. Positions 247 and 262 each coordinate GTP. Residues 329-434 (TKSPLAQMEE…EKNKKKGKIF (106 aa)) are a coiled coil. Serine 331 is subject to Phosphoserine. Lysine 370 carries the post-translational modification N6-acetyllysine. The span at 377–407 (QRRHEQMKKNLEAQHKGLEEKRRQFEDEKAN) shows a compositional bias: basic and acidic residues. The disordered stretch occupies residues 377–434 (QRRHEQMKKNLEAQHKGLEEKRRQFEDEKANWEAQQRILEQQNSSRTLEKNKKKGKIF). Serine 421 bears the Phosphoserine mark. The residue at position 423 (threonine 423) is a Phosphothreonine.

Belongs to the TRAFAC class TrmE-Era-EngA-EngB-Septin-like GTPase superfamily. Septin GTPase family. In terms of assembly, septins polymerize into heterooligomeric protein complexes that form filaments, and associate with cellular membranes, actin filaments and microtubules. GTPase activity is required for filament formation. Filaments are assembled from asymmetrical heterotrimers, composed of SEPTIN2, SEPTIN6 and SEPTIN7 that associate head-to-head to form a hexameric unit. Within the trimer, directly interacts with SEPTIN6, while interaction with SEPTIN2 seems indirect. In the absence of SEPTIN6, forms homodimers. Interacts directly with CENPE and links CENPE to septin filaments composed of SEPTIN2, SEPTIN6 and SEPTIN7. Interacts with SEPTIN5, SEPTIN8, SEPTIN9 and SEPTIN11. Component of a septin core octameric complex consisting of SEPTIN12, SEPTIN7, SEPTIN6 and SEPTIN2 or SEPTIN4 in the order 12-7-6-2-2-6-7-12 or 12-7-6-4-4-6-7-12 and located in the sperm annulus; the SEPTIN12:SEPTIN7 association is mediated by the respective GTP-binding domains.

It localises to the cytoplasm. It is found in the chromosome. Its subcellular location is the centromere. The protein localises to the kinetochore. The protein resides in the cytoskeleton. It localises to the spindle. It is found in the cleavage furrow. Its subcellular location is the midbody. The protein localises to the cilium axoneme. The protein resides in the cell projection. It localises to the cilium. It is found in the flagellum. Functionally, filament-forming cytoskeletal GTPase. Required for normal organization of the actin cytoskeleton. Required for normal progress through mitosis. Involved in cytokinesis. Required for normal association of CENPE with the kinetochore. Plays a role in ciliogenesis and collective cell movements. Forms a filamentous structure with SEPTIN12, SEPTIN6, SEPTIN2 and probably SEPTIN4 at the sperm annulus which is required for the structural integrity and motility of the sperm tail during postmeiotic differentiation. The chain is Septin-7 from Pan troglodytes (Chimpanzee).